A 395-amino-acid polypeptide reads, in one-letter code: Elongation factor Tu (395 aa).

One can recognise a tr-type G domain in the interval 10 to 204; it reads KTHANIGTIG…AVDEYIPTPE (195 aa). Residues 19–26 are G1; it reads GHVDHGKT. 19 to 26 contacts GTP; that stretch reads GHVDHGKT. Residue threonine 26 participates in Mg(2+) binding. The tract at residues 60-64 is G2; the sequence is GITIN. The tract at residues 81–84 is G3; it reads DCPG. Residues 81–85 and 136–139 each bind GTP; these read DCPGH and NKVD. The interval 136–139 is G4; it reads NKVD. The interval 174–176 is G5; that stretch reads SAL.

This sequence belongs to the TRAFAC class translation factor GTPase superfamily. Classic translation factor GTPase family. EF-Tu/EF-1A subfamily. As to quaternary structure, monomer.

It localises to the cytoplasm. The enzyme catalyses GTP + H2O = GDP + phosphate + H(+). Its function is as follows. GTP hydrolase that promotes the GTP-dependent binding of aminoacyl-tRNA to the A-site of ribosomes during protein biosynthesis. The polypeptide is Elongation factor Tu (Macrococcus caseolyticus (strain JCSC5402) (Macrococcoides caseolyticum)).